Here is a 299-residue protein sequence, read N- to C-terminus: Beta-lactamase VEB-1 (299 aa).

The N-terminal stretch at 1 to 23 (MKIVKRILLVLLSLFFTIVYSNA) is a signal peptide. Residue Ser-68 is the Nucleophile; acyl-ester intermediate of the active site. Positions 71, 131, and 167 each coordinate a beta-lactam. Glu-167 acts as the Proton acceptor in catalysis.

Belongs to the class-A beta-lactamase family.

It catalyses the reaction a beta-lactam + H2O = a substituted beta-amino acid. Its activity is regulated as follows. Inhibited by the beta-lactamase-blocking agent clavulanic acid. Its function is as follows. Class A beta-lactamase which confers resistance to the beta-lactam antibiotics, including penicillins and cephalosporins, in E.coli strain JM109. Acts via hydrolysis of the beta-lactam ring. Has penicillin-, and cephalosporin-hydrolyzing activities. The protein is Beta-lactamase VEB-1 of Pseudomonas aeruginosa.